A 411-amino-acid polypeptide reads, in one-letter code: 2,3-bisphosphoglycerate-independent phosphoglycerate mutase (411 aa).

The protein belongs to the BPG-independent phosphoglycerate mutase family. A-PGAM subfamily. As to quaternary structure, homotetramer. Mg(2+) serves as cofactor.

The enzyme catalyses (2R)-2-phosphoglycerate = (2R)-3-phosphoglycerate. The protein operates within carbohydrate degradation; glycolysis; pyruvate from D-glyceraldehyde 3-phosphate: step 3/5. Its activity is regulated as follows. Inhibited to approximately 20% by EDTA. Catalyzes the interconversion of 2-phosphoglycerate and 3-phosphoglycerate. This is 2,3-bisphosphoglycerate-independent phosphoglycerate mutase (apgM) from Pyrococcus furiosus (strain ATCC 43587 / DSM 3638 / JCM 8422 / Vc1).